The chain runs to 984 residues: Pre-mRNA-splicing factor cwf10 (984 aa).

The tract at residues Met-1 to Gln-28 is disordered. A tr-type G domain is found at Asp-139–Glu-402. The tract at residues Gly-148–Ser-155 is G1. Residue Gly-148–Ser-155 coordinates GTP. The G2 stretch occupies residues Val-190–Lys-194. A G3 region spans residues Asp-216 to Gly-219. Residues Asp-216–His-220 and Asn-270–Asp-273 contribute to the GTP site. The segment at Asn-270–Asp-273 is G4. The G5 stretch occupies residues Gln-371–Leu-373.

It belongs to the TRAFAC class translation factor GTPase superfamily. Classic translation factor GTPase family. EF-G/EF-2 subfamily. In terms of assembly, belongs to the 40S cdc5-associated complex (or cwf complex), a spliceosome sub-complex reminiscent of a late-stage spliceosome composed of the U2, U5 and U6 snRNAs and at least brr2, cdc5, cwf2/prp3, cwf3/syf1, cwf4/syf3, cwf5/ecm2, spp42/cwf6, cwf7/spf27, cwf8, cwf9, cwf10, cwf11, cwf12, prp45/cwf13, cwf14, cwf15, cwf16, cwf17, cwf18, cwf19, cwf20, cwf21, cwf22, cwf23, cwf24, cwf25, cwf26, cyp7/cwf27, cwf28, cwf29/ist3, lea1, msl1, prp5/cwf1, prp10, prp12/sap130, prp17, prp22, sap61, sap62, sap114, sap145, slu7, smb1, smd1, smd3, smf1, smg1 and syf2.

It localises to the cytoplasm. It is found in the nucleus. Its function is as follows. Component of the U5 snRNP complex required for pre-mRNA splicing. Binds GTP. In Schizosaccharomyces pombe (strain 972 / ATCC 24843) (Fission yeast), this protein is Pre-mRNA-splicing factor cwf10 (cwf10).